The sequence spans 150 residues: Bcl-2-interacting killer (150 aa).

The BH3 motif lies at 51-65 (VALRLACIGDEMDLC). A helical transmembrane segment spans residues 127–147 (PGQLFPMVLLVFLLLGGAWYL). Residues 127–148 (PGQLFPMVLLVFLLLGGAWYLQ) are leucine-zipper.

Interacts with RHBDL4/RHBDD1. Interacts with BCL2L10/BCL-B. In terms of processing, proteolytically cleaved by RHBDL4/RHBDD1. RHBDL4/RHBDD1-induced cleavage is a necessary step prior its degradation by the proteosome-dependent mechanism. Post-translationally, ubiquitinated by the ECS(ASB11) complex in response to endoplasmic reticulum stress, leading to substrate recognition by the segregase p97/VCP and degradation by the proteasome. Expressed in testis, kidney, liver, lung and heart.

It is found in the endomembrane system. The protein resides in the mitochondrion membrane. Functionally, accelerates programmed cell death. Binding to the apoptosis repressors Bcl-X(L), BHRF1 or Bcl-2 suppresses this death-promoting activity. The protein is Bcl-2-interacting killer (Bik) of Mus musculus (Mouse).